Consider the following 382-residue polypeptide: Lipid-A-disaccharide synthase (382 aa).

Belongs to the LpxB family.

It carries out the reaction 2-N,3-O-bis[(3R)-3-hydroxytetradecanoyl]-alpha-D-glucosaminyl 1-phosphate + UDP-2-N,3-O-bis[(3R)-3-hydroxytetradecanoyl]-alpha-D-glucosamine = lipid A disaccharide (E. coli) + UDP + H(+). The catalysed reaction is a lipid X + a UDP-2-N,3-O-bis[(3R)-3-hydroxyacyl]-alpha-D-glucosamine = a lipid A disaccharide + UDP + H(+). The protein operates within glycolipid biosynthesis; lipid IV(A) biosynthesis; lipid IV(A) from (3R)-3-hydroxytetradecanoyl-[acyl-carrier-protein] and UDP-N-acetyl-alpha-D-glucosamine: step 5/6. Condensation of UDP-2,3-diacylglucosamine and 2,3-diacylglucosamine-1-phosphate to form lipid A disaccharide, a precursor of lipid A, a phosphorylated glycolipid that anchors the lipopolysaccharide to the outer membrane of the cell. The polypeptide is Lipid-A-disaccharide synthase (Salmonella paratyphi B (strain ATCC BAA-1250 / SPB7)).